The following is a 630-amino-acid chain: 1-deoxy-D-xylulose-5-phosphate synthase (630 aa).

Residues His-72 and 113-115 (GHS) each bind thiamine diphosphate. Residue Asp-144 participates in Mg(2+) binding. Thiamine diphosphate-binding positions include 145 to 146 (GA), Asn-173, Tyr-284, and Glu-367. Asn-173 is a binding site for Mg(2+).

This sequence belongs to the transketolase family. DXPS subfamily. Homodimer. The cofactor is Mg(2+). It depends on thiamine diphosphate as a cofactor.

The enzyme catalyses D-glyceraldehyde 3-phosphate + pyruvate + H(+) = 1-deoxy-D-xylulose 5-phosphate + CO2. Its pathway is metabolic intermediate biosynthesis; 1-deoxy-D-xylulose 5-phosphate biosynthesis; 1-deoxy-D-xylulose 5-phosphate from D-glyceraldehyde 3-phosphate and pyruvate: step 1/1. Functionally, catalyzes the acyloin condensation reaction between C atoms 2 and 3 of pyruvate and glyceraldehyde 3-phosphate to yield 1-deoxy-D-xylulose-5-phosphate (DXP). The chain is 1-deoxy-D-xylulose-5-phosphate synthase from Geobacillus sp. (strain WCH70).